Reading from the N-terminus, the 100-residue chain is Putative protein BCL8 (100 aa).

Expressed in prostate and testis.

This chain is Putative protein BCL8 (NBEAP1), found in Homo sapiens (Human).